We begin with the raw amino-acid sequence, 96 residues long: Small ribosomal subunit protein bS6 (96 aa).

This sequence belongs to the bacterial ribosomal protein bS6 family.

Its function is as follows. Binds together with bS18 to 16S ribosomal RNA. The polypeptide is Small ribosomal subunit protein bS6 (Thermobifida fusca (strain YX)).